The chain runs to 260 residues: Proteasome assembly chaperone 2 (260 aa).

It belongs to the PSMG2 family. As to quaternary structure, forms a heterodimer with psmg1. Degraded by the proteasome upon completion of 20S proteasome maturation.

It is found in the nucleus. Functionally, chaperone protein which promotes assembly of the 20S proteasome as part of a heterodimer with psmg1. This Danio rerio (Zebrafish) protein is Proteasome assembly chaperone 2.